We begin with the raw amino-acid sequence, 1399 residues long: DNA-directed RNA polymerase subunit beta' (1399 aa).

Positions 70, 72, 85, and 88 each coordinate Zn(2+). Mg(2+) is bound by residues Asp-460, Asp-462, and Asp-464. Zn(2+) contacts are provided by Cys-814, Cys-888, Cys-895, and Cys-898. The segment at 1367-1399 (SERKRQRDLGKPQRVSASEAEAALTEALNSSGN) is disordered. The segment covering 1382-1399 (SASEAEAALTEALNSSGN) has biased composition (low complexity).

It belongs to the RNA polymerase beta' chain family. The RNAP catalytic core consists of 2 alpha, 1 beta, 1 beta' and 1 omega subunit. When a sigma factor is associated with the core the holoenzyme is formed, which can initiate transcription. Mg(2+) serves as cofactor. It depends on Zn(2+) as a cofactor.

It catalyses the reaction RNA(n) + a ribonucleoside 5'-triphosphate = RNA(n+1) + diphosphate. In terms of biological role, DNA-dependent RNA polymerase catalyzes the transcription of DNA into RNA using the four ribonucleoside triphosphates as substrates. The protein is DNA-directed RNA polymerase subunit beta' of Pseudomonas aeruginosa (strain UCBPP-PA14).